The following is a 1384-amino-acid chain: DNA-directed RNA polymerase subunit beta (1384 aa).

It belongs to the RNA polymerase beta chain family. The RNAP catalytic core consists of 2 alpha, 1 beta, 1 beta' and 1 omega subunit. When a sigma factor is associated with the core the holoenzyme is formed, which can initiate transcription.

It catalyses the reaction RNA(n) + a ribonucleoside 5'-triphosphate = RNA(n+1) + diphosphate. In terms of biological role, DNA-dependent RNA polymerase catalyzes the transcription of DNA into RNA using the four ribonucleoside triphosphates as substrates. This Xylella fastidiosa (strain M23) protein is DNA-directed RNA polymerase subunit beta.